Consider the following 125-residue polypeptide: Large ribosomal subunit protein bL12 (125 aa).

It belongs to the bacterial ribosomal protein bL12 family. As to quaternary structure, homodimer. Part of the ribosomal stalk of the 50S ribosomal subunit. Forms a multimeric L10(L12)X complex, where L10 forms an elongated spine to which 2 to 4 L12 dimers bind in a sequential fashion. Binds GTP-bound translation factors.

In terms of biological role, forms part of the ribosomal stalk which helps the ribosome interact with GTP-bound translation factors. Is thus essential for accurate translation. This chain is Large ribosomal subunit protein bL12, found in Campylobacter curvus (strain 525.92).